The following is a 213-amino-acid chain: Protein-L-isoaspartate O-methyltransferase (213 aa).

S60 is a catalytic residue.

This sequence belongs to the methyltransferase superfamily. L-isoaspartyl/D-aspartyl protein methyltransferase family.

The protein localises to the cytoplasm. The catalysed reaction is [protein]-L-isoaspartate + S-adenosyl-L-methionine = [protein]-L-isoaspartate alpha-methyl ester + S-adenosyl-L-homocysteine. Its function is as follows. Catalyzes the methyl esterification of L-isoaspartyl residues in peptides and proteins that result from spontaneous decomposition of normal L-aspartyl and L-asparaginyl residues. It plays a role in the repair and/or degradation of damaged proteins. The chain is Protein-L-isoaspartate O-methyltransferase from Roseobacter denitrificans (strain ATCC 33942 / OCh 114) (Erythrobacter sp. (strain OCh 114)).